The sequence spans 1710 residues: Chromodomain-helicase-DNA-binding protein 1 (1710 aa).

The span at 1–10 (MNGHSDEESV) shows a compositional bias: basic and acidic residues. The tract at residues 1-252 (MNGHSDEESV…KEDEEMKTDS (252 aa)) is disordered. Low complexity predominate over residues 35–63 (SSGSSSDGSSSQSGSSDSDSGSESGSQSE). Positions 67–85 (DTSRENKVQAKPPKVDGAE) are enriched in basic and acidic residues. The segment covering 105–121 (QQQQQQQQQHQASSNSG) has biased composition (low complexity). A compositionally biased stretch (acidic residues) spans 122 to 136 (SEEDSSSSEDSDDSS). Residues 152 to 163 (SGSGSPSQSGSD) show a composition bias toward low complexity. Over residues 187–210 (KVKSRKPQNRSKSKNGKKILGQKK) the composition is skewed to basic residues. 2 positions are modified to phosphoserine: Ser-215 and Ser-216. A compositionally biased stretch (acidic residues) spans 215–226 (SSEEDDDEEDYD). Thr-237 carries the phosphothreonine modification. Ser-241 carries the phosphoserine modification. Phosphothreonine is present on Thr-250. Ser-252 carries the post-translational modification Phosphoserine. 2 consecutive Chromo domains span residues 272 to 364 (ETIE…RWLK) and 389 to 452 (QIVE…TPFK). A Phosphoserine modification is found at Ser-471. Residues 493 to 663 (AHSWCKGNSC…WSLLHFIMPE (171 aa)) enclose the Helicase ATP-binding domain. 506–513 (DEMGLGKT) contributes to the ATP binding site. Residues 614-617 (DEAH) carry the DEAH box motif. A Helicase C-terminal domain is found at 792–943 (LLDKLLIRLR…HLVIQRMDTT (152 aa)). 8 positions are modified to phosphoserine: Ser-1025, Ser-1040, Ser-1081, Ser-1085, Ser-1096, Ser-1098, Ser-1100, and Ser-1102. A disordered region spans residues 1080–1120 (ISFNGSEGRRSRSRRYSGSDSDSISEGKRPKKRGRPRTIPR). Positions 1108-1117 (RPKKRGRPRT) are enriched in basic residues. Residue Ser-1161 is modified to Phosphoserine. Disordered regions lie at residues 1321 to 1408 (EALS…ESEE) and 1502 to 1710 (KKRQ…SRKT). Residues 1329–1345 (SKRRKARAKKNKAMKSI) show a composition bias toward basic residues. 7 positions are modified to phosphoserine: Ser-1353, Ser-1355, Ser-1356, Ser-1360, Ser-1363, Ser-1371, and Ser-1373. The span at 1370–1379 (LSESKSDGRE) shows a compositional bias: basic and acidic residues. The interval 1409–1511 (LDQKTFSICK…KKRQESQQNS (103 aa)) is CHD1 helical C-terminal domain (CHCT). The segment covering 1507–1516 (SQQNSDQNSN) has biased composition (low complexity). Basic and acidic residues-rich tracts occupy residues 1523–1573 (RNPD…DSRK) and 1582–1670 (GKDH…DHRA). At Ser-1622 the chain carries Phosphoserine. A run of 3 repeats spans residues 1628–1632 (HSDHR), 1634–1638 (HSDHR), and 1640–1644 (HSDHR). Residues 1628–1644 (HSDHRSHSDHRLHSDHR) are 3 X 5 AA repeats of H-S-D-H-R. Residues Ser-1677, Arg-1688, and Ser-1689 each carry the phosphoserine modification. Basic and acidic residues predominate over residues 1690-1701 (PFEHSVEHKSTP).

Belongs to the SNF2/RAD54 helicase family. In terms of assembly, component of the SAGA complex. Interacts with BCLAF1, NCoR, SRP20 and SAFB. Specifically interacts with methylated H3K4me2 and H3K4me3. Interacts with the FACT complex, the PAF complex and the U2 snRNP. Interacts directly with PAF1, SFA3A1, SFA3A2, SFA3A3, SNF2 and SSRP1. Expressed in many tissues including in the brain, where the highest level of expression is found in the cerebellum and basal ganglia.

The protein localises to the nucleus. It localises to the cytoplasm. It carries out the reaction ATP + H2O = ADP + phosphate + H(+). Its function is as follows. ATP-dependent chromatin-remodeling factor which functions as substrate recognition component of the transcription regulatory histone acetylation (HAT) complex SAGA. Regulates polymerase II transcription. Also required for efficient transcription by RNA polymerase I, and more specifically the polymerase I transcription termination step. Regulates negatively DNA replication. Not only involved in transcription-related chromatin-remodeling, but also required to maintain a specific chromatin configuration across the genome. Is also associated with histone deacetylase (HDAC) activity. Required for the bridging of SNF2, the FACT complex, the PAF complex as well as the U2 snRNP complex to H3K4me3. Functions to modulate the efficiency of pre-mRNA splicing in part through physical bridging of spliceosomal components to H3K4me3. Required for maintaining open chromatin and pluripotency in embryonic stem cells. This is Chromodomain-helicase-DNA-binding protein 1 from Homo sapiens (Human).